The primary structure comprises 262 residues: Phycoerythrobilin:ferredoxin oxidoreductase (262 aa).

This sequence belongs to the HY2 family.

The catalysed reaction is (3Z)-phycoerythrobilin + oxidized 2[4Fe-4S]-[ferredoxin] = 15,16-dihydrobiliverdin + reduced 2[4Fe-4S]-[ferredoxin] + 2 H(+). Catalyzes the two-electron reduction of the C2 and C3(1) diene system of 15,16-dihydrobiliverdin. In Synechococcus sp. (strain RCC307), this protein is Phycoerythrobilin:ferredoxin oxidoreductase.